Reading from the N-terminus, the 642-residue chain is Threonine--tRNA ligase (642 aa).

Positions 1–61 constitute a TGS domain; it reads MPIITLPDGS…EEDASLEIIT (61 aa). The segment at 244-535 is catalytic; it reads DHRKIGKQLD…LIEEYAGFFP (292 aa). Residues cysteine 335, histidine 386, and histidine 512 each coordinate Zn(2+).

This sequence belongs to the class-II aminoacyl-tRNA synthetase family. Homodimer. It depends on Zn(2+) as a cofactor.

The protein resides in the cytoplasm. The enzyme catalyses tRNA(Thr) + L-threonine + ATP = L-threonyl-tRNA(Thr) + AMP + diphosphate + H(+). In terms of biological role, catalyzes the attachment of threonine to tRNA(Thr) in a two-step reaction: L-threonine is first activated by ATP to form Thr-AMP and then transferred to the acceptor end of tRNA(Thr). Also edits incorrectly charged L-seryl-tRNA(Thr). In Vibrio parahaemolyticus serotype O3:K6 (strain RIMD 2210633), this protein is Threonine--tRNA ligase.